Reading from the N-terminus, the 284-residue chain is Shikimate dehydrogenase (NADP(+)) (284 aa).

Shikimate-binding positions include S20–S22 and S67. The active-site Proton acceptor is K71. D83 serves as a coordination point for NADP(+). N92 and D107 together coordinate shikimate. NADP(+) is bound by residues G129–A133 and I227. Position 229 (Y229) interacts with shikimate. NADP(+) is bound at residue G250.

Belongs to the shikimate dehydrogenase family. In terms of assembly, homodimer.

The enzyme catalyses shikimate + NADP(+) = 3-dehydroshikimate + NADPH + H(+). It functions in the pathway metabolic intermediate biosynthesis; chorismate biosynthesis; chorismate from D-erythrose 4-phosphate and phosphoenolpyruvate: step 4/7. Functionally, involved in the biosynthesis of the chorismate, which leads to the biosynthesis of aromatic amino acids. Catalyzes the reversible NADPH linked reduction of 3-dehydroshikimate (DHSA) to yield shikimate (SA). This chain is Shikimate dehydrogenase (NADP(+)), found in Streptococcus pneumoniae (strain JJA).